We begin with the raw amino-acid sequence, 230 residues long: MTQKHGKKYTAALAKVEAEKNYALNDAVALVKEIDYANFDASVEVAFKLNVDTRQADQQLRGAVVLPNGTGKDKKVIVFAQGDKAKEAEAAGADVVGAADLVAQIQGGWMDFDTAIATPDMMAQVGRVARILGPKGMMPNPKTGTVTMDVAKAVSDAKGGQVTYRTDRDGNVAVPVGRVSFEEGKLAENIKTIADTVLKARPAAVKGTYVQHVSIASTFGPAVALDLNTL.

This sequence belongs to the universal ribosomal protein uL1 family. As to quaternary structure, part of the 50S ribosomal subunit.

Its function is as follows. Binds directly to 23S rRNA. The L1 stalk is quite mobile in the ribosome, and is involved in E site tRNA release. Functionally, protein L1 is also a translational repressor protein, it controls the translation of the L11 operon by binding to its mRNA. The protein is Large ribosomal subunit protein uL1 of Leuconostoc citreum (strain KM20).